Consider the following 316-residue polypeptide: Nucleotide-binding protein NFA_35930 (316 aa).

32 to 39 serves as a coordination point for ATP; it reads GLSGAGRG. Residue 83–86 participates in GTP binding; sequence DVRS.

This sequence belongs to the RapZ-like family.

Displays ATPase and GTPase activities. This is Nucleotide-binding protein NFA_35930 from Nocardia farcinica (strain IFM 10152).